The sequence spans 379 residues: NADH-quinone oxidoreductase subunit D 1 (379 aa).

It belongs to the complex I 49 kDa subunit family. As to quaternary structure, NDH-1 is composed of 14 different subunits. Subunits NuoB, C, D, E, F, and G constitute the peripheral sector of the complex.

It localises to the cell inner membrane. It carries out the reaction a quinone + NADH + 5 H(+)(in) = a quinol + NAD(+) + 4 H(+)(out). Its function is as follows. NDH-1 shuttles electrons from NADH, via FMN and iron-sulfur (Fe-S) centers, to quinones in the respiratory chain. The immediate electron acceptor for the enzyme in this species is believed to be ubiquinone. Couples the redox reaction to proton translocation (for every two electrons transferred, four hydrogen ions are translocated across the cytoplasmic membrane), and thus conserves the redox energy in a proton gradient. The sequence is that of NADH-quinone oxidoreductase subunit D 1 from Anaeromyxobacter sp. (strain K).